Consider the following 140-residue polypeptide: Large ribosomal subunit protein uL16 (140 aa).

Belongs to the universal ribosomal protein uL16 family. Part of the 50S ribosomal subunit.

In terms of biological role, binds 23S rRNA and is also seen to make contacts with the A and possibly P site tRNAs. The chain is Large ribosomal subunit protein uL16 from Citrifermentans bemidjiense (strain ATCC BAA-1014 / DSM 16622 / JCM 12645 / Bem) (Geobacter bemidjiensis).